Consider the following 387-residue polypeptide: MNRSAALSILKRQSSTAASSSLKRTPLYDLHLKEGATIVPFAGFSMPVQYKGQTISASHKWTREHSGLFDVSHMVQWFVRGENATAYLESITPSSLKELKPFHSTLSAFTNETGGIIDDTIISKQDENTYYIVTNAACSEKDEANLKKHIENWKGVELERVQGRALIAIQGPETASVVQKLIPNVDFSVLKFGQSAYVDFKGVKCLFSRSGYTGEDGFEVSIPEEVSVDFASTLLADTRVRPIGLGARDTLRLEAGMCLYGSDIDDTTSPVEGSLSWIIGKRRRKEGGFVGSSRILKELKDGPSRRRVGFIVEKVPARHGSAVEVDGVEVGQVTSGCPSPTLGKNIAMGYISTGLHQVGTPAHIKVRNKLHPAQVVRMPFVETHYYK.

3 residues coordinate substrate: Glu-219, Arg-248, and Tyr-385.

Belongs to the GcvT family. As to quaternary structure, the glycine cleavage system is composed of four proteins: P, T, L and H.

The protein resides in the mitochondrion. It catalyses the reaction N(6)-[(R)-S(8)-aminomethyldihydrolipoyl]-L-lysyl-[protein] + (6S)-5,6,7,8-tetrahydrofolate = N(6)-[(R)-dihydrolipoyl]-L-lysyl-[protein] + (6R)-5,10-methylene-5,6,7,8-tetrahydrofolate + NH4(+). The glycine cleavage system catalyzes the degradation of glycine. The polypeptide is Probable aminomethyltransferase, mitochondrial (gcv1) (Schizosaccharomyces pombe (strain 972 / ATCC 24843) (Fission yeast)).